Consider the following 446-residue polypeptide: Phosphoglucosamine mutase (446 aa).

Catalysis depends on S99, which acts as the Phosphoserine intermediate. Residues S99, D242, D244, and D246 each contribute to the Mg(2+) site. S99 is modified (phosphoserine).

This sequence belongs to the phosphohexose mutase family. Mg(2+) serves as cofactor. Post-translationally, activated by phosphorylation.

It catalyses the reaction alpha-D-glucosamine 1-phosphate = D-glucosamine 6-phosphate. Catalyzes the conversion of glucosamine-6-phosphate to glucosamine-1-phosphate. The protein is Phosphoglucosamine mutase of Wolinella succinogenes (strain ATCC 29543 / DSM 1740 / CCUG 13145 / JCM 31913 / LMG 7466 / NCTC 11488 / FDC 602W) (Vibrio succinogenes).